The sequence spans 341 residues: Phenylalanine--tRNA ligase alpha subunit (341 aa).

Residue Glu254 coordinates Mg(2+).

This sequence belongs to the class-II aminoacyl-tRNA synthetase family. Phe-tRNA synthetase alpha subunit type 1 subfamily. In terms of assembly, tetramer of two alpha and two beta subunits. Mg(2+) is required as a cofactor.

The protein localises to the cytoplasm. It carries out the reaction tRNA(Phe) + L-phenylalanine + ATP = L-phenylalanyl-tRNA(Phe) + AMP + diphosphate + H(+). In Chlorobaculum tepidum (strain ATCC 49652 / DSM 12025 / NBRC 103806 / TLS) (Chlorobium tepidum), this protein is Phenylalanine--tRNA ligase alpha subunit.